The following is a 224-amino-acid chain: 7-cyano-7-deazaguanine synthase (224 aa).

An ATP-binding site is contributed by 10–20 (LSGGLDSATVV). Zn(2+) contacts are provided by Cys189, Cys199, Cys202, and Cys205.

Belongs to the QueC family. The cofactor is Zn(2+).

It carries out the reaction 7-carboxy-7-deazaguanine + NH4(+) + ATP = 7-cyano-7-deazaguanine + ADP + phosphate + H2O + H(+). It participates in purine metabolism; 7-cyano-7-deazaguanine biosynthesis. Catalyzes the ATP-dependent conversion of 7-carboxy-7-deazaguanine (CDG) to 7-cyano-7-deazaguanine (preQ(0)). This is 7-cyano-7-deazaguanine synthase from Pseudomonas putida (strain ATCC 47054 / DSM 6125 / CFBP 8728 / NCIMB 11950 / KT2440).